The sequence spans 176 residues: Adenine phosphoribosyltransferase (176 aa).

The protein belongs to the purine/pyrimidine phosphoribosyltransferase family. Homodimer.

It localises to the cytoplasm. The enzyme catalyses AMP + diphosphate = 5-phospho-alpha-D-ribose 1-diphosphate + adenine. The protein operates within purine metabolism; AMP biosynthesis via salvage pathway; AMP from adenine: step 1/1. Its function is as follows. Catalyzes a salvage reaction resulting in the formation of AMP, that is energically less costly than de novo synthesis. This is Adenine phosphoribosyltransferase from Borreliella burgdorferi (strain ATCC 35210 / DSM 4680 / CIP 102532 / B31) (Borrelia burgdorferi).